Consider the following 382-residue polypeptide: Succinate--CoA ligase [ADP-forming] subunit beta (382 aa).

ATP is bound by residues Lys46, 53 to 55, Val95, and Glu100; that span reads GRG. Mg(2+)-binding residues include Asn192 and Asp206. Residues Asn257 and 314–316 contribute to the substrate site; that span reads GIT.

It belongs to the succinate/malate CoA ligase beta subunit family. In terms of assembly, heterotetramer of two alpha and two beta subunits. It depends on Mg(2+) as a cofactor.

The enzyme catalyses succinate + ATP + CoA = succinyl-CoA + ADP + phosphate. It catalyses the reaction GTP + succinate + CoA = succinyl-CoA + GDP + phosphate. Its pathway is carbohydrate metabolism; tricarboxylic acid cycle; succinate from succinyl-CoA (ligase route): step 1/1. In terms of biological role, succinyl-CoA synthetase functions in the citric acid cycle (TCA), coupling the hydrolysis of succinyl-CoA to the synthesis of either ATP or GTP and thus represents the only step of substrate-level phosphorylation in the TCA. The beta subunit provides nucleotide specificity of the enzyme and binds the substrate succinate, while the binding sites for coenzyme A and phosphate are found in the alpha subunit. The polypeptide is Succinate--CoA ligase [ADP-forming] subunit beta (Bacteroides fragilis (strain ATCC 25285 / DSM 2151 / CCUG 4856 / JCM 11019 / LMG 10263 / NCTC 9343 / Onslow / VPI 2553 / EN-2)).